Consider the following 25-residue polypeptide: SMLSVLKNLGKVGLGLVACKINKQC.

Cysteines 19 and 25 form a disulfide.

As to expression, expressed by the skin glands.

It localises to the secreted. Antibacterial activity against Gram-positive bacterium S.aureus (MIC=55 uM) and Gram-negative bacterium E.coli (MIC=1.5 uM). Has activity against C.albicans (MIC=58 uM). The polypeptide is Ranatuerin-1C (Lithobates clamitans (Green frog)).